The following is a 658-amino-acid chain: Alkyldihydroxyacetonephosphate synthase, peroxisomal (658 aa).

Disordered stretches follow at residues 1-41 (MAEA…LRVL) and 63-86 (AASA…IPKK). The N-terminal 58 residues, 1 to 58 (MAEAAAAAGGTGLGAGASYGSAADRDRDPDPDRAGRRLRVLSGHLLGRPREALSTNEC), are a transit peptide targeting the peroxisome. A compositionally biased stretch (basic and acidic residues) spans 23–35 (ADRDRDPDPDRAG). Positions 63-77 (AASAATAAPTATPAA) are enriched in low complexity. Ser-65 carries the phosphoserine modification. Phosphothreonine is present on Thr-74. Lys-102 is modified (N6-acetyllysine). An FAD-binding PCMH-type domain is found at 202-384 (FERIPDIVLW…TEATIKIRPV (183 aa)). Residues 234-240 (PIGGGTS), 303-309 (DSLEFST), and 316-319 (TRAS) contribute to the FAD site. The residue at position 347 (Lys-347) is an N6-acetyllysine. 368–374 (EGTLGVI) contacts FAD. Arg-515 contacts substrate. Tyr-578 serves as the catalytic Proton donor/acceptor. Important for enzyme activity stretches follow at residues 615 to 617 (HHH) and 654 to 658 (NRNLL).

The protein belongs to the FAD-binding oxidoreductase/transferase type 4 family. As to quaternary structure, homodimer. Requires FAD as cofactor.

The protein resides in the peroxisome membrane. The protein localises to the peroxisome. It catalyses the reaction a long chain fatty alcohol + a 1-acylglycerone 3-phosphate = a 1-O-alkylglycerone 3-phosphate + a long-chain fatty acid + H(+). The enzyme catalyses hexadecan-1-ol + 1-hexadecanoylglycerone 3-phosphate = 1-O-hexadecylglycerone 3-phosphate + hexadecanoate + H(+). It carries out the reaction 1-hexadecanoylglycerone 3-phosphate + a long-chain fatty acid = a 1-acylglycerone 3-phosphate + hexadecanoate. Its pathway is glycerolipid metabolism; ether lipid biosynthesis. In terms of biological role, catalyzes the exchange of the acyl chain in acyl-dihydroxyacetonephosphate (acyl-DHAP) for a long chain fatty alcohol, yielding the first ether linked intermediate, i.e. alkyl-dihydroxyacetonephosphate (alkyl-DHAP), in the pathway of ether lipid biosynthesis. This chain is Alkyldihydroxyacetonephosphate synthase, peroxisomal (AGPS), found in Homo sapiens (Human).